We begin with the raw amino-acid sequence, 2540 residues long: Probable JmjC domain-containing histone demethylation protein 2C (2540 aa).

A compositionally biased stretch (polar residues) spans 278 to 309 (TRAQANSPRPAMNSQAAVPKQNTHQQQQQRSI). Positions 278 to 478 (TRAQANSPRP…TVSDHNSNDL (201 aa)) are disordered. Phosphoserine occurs at positions 317 and 320. Basic and acidic residues predominate over residues 323-342 (DEEKMKEEKYDYISRGENPK). The segment covering 343–353 (GKNKHLMNKRR) has biased composition (basic residues). Positions 354–371 (KPEEDEKKLNMKRLRTDN) are enriched in basic and acidic residues. 2 positions are modified to phosphoserine: Ser-373 and Ser-376. Positions 373-382 (SDFSESSDSE) are enriched in low complexity. 3 stretches are compositionally biased toward basic and acidic residues: residues 383–403 (NSNK…ELKN), 410–427 (NGEE…EETL), and 438–452 (QEDK…RKSV). Polar residues predominate over residues 464–478 (SSEQSTVSDHNSNDL). Residues Ser-475 and Ser-501 each carry the phosphoserine modification. The residue at position 505 (Thr-505) is a Phosphothreonine. Residues Ser-601, Ser-617, Ser-638, Ser-639, Ser-641, Ser-652, and Ser-943 each carry the phosphoserine modification. Residues 631–656 (VDTHKIKSSPSPEVVKPKITHSPDSV) are disordered. Disordered stretches follow at residues 1242-1263 (GKVQ…SQAN) and 1614-1692 (NRRK…NSNT). Residues 1643–1652 (KRQPKPTYKK) are compositionally biased toward basic residues. The span at 1653–1669 (KQNDLQKRKGEIEEDLK) shows a compositional bias: basic and acidic residues. Residues 1846–1871 (CDACEATLFNIHWVCQKCGFVVCLDC) form a C6-type zinc finger. Residues 1971 to 1991 (PESQQQNTPPKSEKNGGSSPE) are compositionally biased toward polar residues. The interval 1971–2064 (PESQQQNTPP…LVSQNNEQGS (94 aa)) is disordered. At Ser-1989 the chain carries Phosphoserine. Residues 2016-2043 (AEQKAREEKKENKELTLENQIKEEREQD) are compositionally biased toward basic and acidic residues. A compositionally biased stretch (polar residues) spans 2045–2064 (SESPNGRTSPLVSQNNEQGS). The LXXLL motif signature appears at 2066 to 2070 (LRDLL). Residues Lys-2132 and Lys-2136 each participate in a glycyl lysine isopeptide (Lys-Gly) (interchain with G-Cter in SUMO2) cross-link. The region spanning 2274–2498 (MPARYEDLLK…ESFHLTQELR (225 aa)) is the JmjC domain. Positions 2336, 2338, and 2466 each coordinate Fe cation.

The protein belongs to the JHDM2 histone demethylase family. Interacts specifically with the ligand-binding domain of the thyroid receptor (TR). Requires the presence of thyroid hormone for its interaction. Requires Fe(2+) as cofactor.

Its subcellular location is the nucleus. Its function is as follows. Probable histone demethylase that specifically demethylates 'Lys-9' of histone H3, thereby playing a central role in histone code. Demethylation of Lys residue generates formaldehyde and succinate. May be involved in hormone-dependent transcriptional activation, by participating in recruitment to androgen-receptor target genes. In Homo sapiens (Human), this protein is Probable JmjC domain-containing histone demethylation protein 2C (JMJD1C).